Reading from the N-terminus, the 377-residue chain is Guanine nucleotide-binding protein subunit beta-1 (377 aa).

WD repeat units follow at residues 63–93 (GHTG…IVWN), 105–135 (LPCA…SIFN), 154–185 (GHKG…VLWD), 202–233 (GHTA…RLWD), 246–276 (GHEG…RLFD), 293–323 (GDIP…YVWD), and 339–369 (SHEG…KIWA).

Belongs to the WD repeat G protein beta family. In terms of assembly, g proteins are composed of 3 units, alpha, beta and gamma.

Guanine nucleotide-binding proteins (G proteins) are involved as a modulator or transducer in various transmembrane signaling systems. The beta and gamma chains are required for the GTPase activity, for replacement of GDP by GTP, and for G protein-effector interaction. This chain is Guanine nucleotide-binding protein subunit beta-1, found in Nicotiana tabacum (Common tobacco).